The chain runs to 241 residues: 3-oxoacyl-[acyl-carrier-protein] reductase FabG (241 aa).

NADP(+) contacts are provided by residues 13 to 16, Ser38, 57 to 58, and Asn83; these read GASG and EI. Ser135 contributes to the substrate binding site. Tyr148 (proton acceptor) is an active-site residue. Residues 148-152 and Ile181 contribute to the NADP(+) site; that span reads YCASK.

The protein belongs to the short-chain dehydrogenases/reductases (SDR) family. As to quaternary structure, homotetramer.

It catalyses the reaction a (3R)-hydroxyacyl-[ACP] + NADP(+) = a 3-oxoacyl-[ACP] + NADPH + H(+). It participates in lipid metabolism; fatty acid biosynthesis. Catalyzes the NADPH-dependent reduction of beta-ketoacyl-ACP substrates to beta-hydroxyacyl-ACP products, the first reductive step in the elongation cycle of fatty acid biosynthesis. The protein is 3-oxoacyl-[acyl-carrier-protein] reductase FabG (fabG) of Rickettsia felis (strain ATCC VR-1525 / URRWXCal2) (Rickettsia azadi).